Consider the following 757-residue polypeptide: Maltose phosphorylase (757 aa).

354-355 (WD) serves as a coordination point for substrate. Catalysis depends on glutamate 483, which acts as the Proton donor. 588-589 (KQ) provides a ligand contact to substrate.

Belongs to the glycosyl hydrolase 65 family.

The catalysed reaction is D-maltose + phosphate = beta-D-glucose 1-phosphate + D-glucose. The protein operates within glycan degradation; maltose degradation. Catalyzes the phosphorolysis of maltose, leading to the formation of glucose and glucose 1-P. The chain is Maltose phosphorylase (mdxK) from Bacillus subtilis (strain 168).